The following is a 209-amino-acid chain: uncharacterized protein (209 aa).

Positions 1–199 (MQVFLDLDET…DELKRVTASL (199 aa)) constitute an FCP1 homology domain.

This is an uncharacterized protein from Dryophytes versicolor (chameleon treefrog).